We begin with the raw amino-acid sequence, 314 residues long: Deoxymugineic acid synthase 1-D (314 aa).

The segment at 1–21 (MGAGEKTAAGMPRIGMGTAVQ) is disordered. Residue D44 coordinates NADP(+). The active-site Proton donor is Y49. A substrate-binding site is contributed by H112. NADP(+) is bound by residues 158-159 (AN), Q180, 258-266 (FDEARMREN), and 273-281 (ELTEEERLR).

This sequence belongs to the aldo/keto reductase family. Mostly expressed in root tissues, observed, at low levels, in mesocotyl and embryonic roots, seedling roots, crown and seedling leafes, mature bracts, anthers, pistil, caryopsis and embryos.

The catalysed reaction is 2'-deoxymugineate + NAD(+) = 3''-deamino-3''-oxonicotianamine + NADH + H(+). It carries out the reaction 2'-deoxymugineate + NADP(+) = 3''-deamino-3''-oxonicotianamine + NADPH + H(+). It functions in the pathway siderophore biosynthesis. Catalyzes the reduction of a 3''-keto intermediate during the biosynthesis of 2'-deoxymugineic acid (DMA) from L-Met. Involved in the formation of phytosiderophores (MAs) belonging to the mugineic acid family and required to acquire iron. The protein is Deoxymugineic acid synthase 1-D of Triticum aestivum (Wheat).